We begin with the raw amino-acid sequence, 366 residues long: Protein FAM131A (366 aa).

A disordered region spans residues 342 to 366 (QRQASDLASSGVVSLDEDEAEPEEQ). The segment covering 356–366 (LDEDEAEPEEQ) has biased composition (acidic residues).

It belongs to the FAM131 family.

The protein is Protein FAM131A (FAM131A) of Homo sapiens (Human).